Consider the following 332-residue polypeptide: Putative threonine dehydratase (332 aa).

Lys-56 bears the N6-(pyridoxal phosphate)lysine mark.

It belongs to the serine/threonine dehydratase family. Pyridoxal 5'-phosphate is required as a cofactor.

The catalysed reaction is L-threonine = 2-oxobutanoate + NH4(+). The protein operates within amino-acid biosynthesis; L-isoleucine biosynthesis; 2-oxobutanoate from L-threonine: step 1/1. The chain is Putative threonine dehydratase from Sinorhizobium fredii (strain NBRC 101917 / NGR234).